Consider the following 342-residue polypeptide: L-threonine 3-dehydrogenase (342 aa).

Cysteine 38 provides a ligand contact to Zn(2+). Active-site charge relay system residues include threonine 40 and histidine 43. The Zn(2+) site is built by histidine 63, glutamate 64, cysteine 93, cysteine 96, cysteine 99, and cysteine 107. NAD(+) contacts are provided by residues valine 175, aspartate 195, arginine 200, 262 to 264 (LGI), and 286 to 287 (IY).

Belongs to the zinc-containing alcohol dehydrogenase family. Homotetramer. Zn(2+) serves as cofactor.

The protein localises to the cytoplasm. The catalysed reaction is L-threonine + NAD(+) = (2S)-2-amino-3-oxobutanoate + NADH + H(+). It participates in amino-acid degradation; L-threonine degradation via oxydo-reductase pathway; glycine from L-threonine: step 1/2. In terms of biological role, catalyzes the NAD(+)-dependent oxidation of L-threonine to 2-amino-3-ketobutyrate. This Coxiella burnetii (strain Dugway 5J108-111) protein is L-threonine 3-dehydrogenase.